The sequence spans 118 residues: Small nuclear ribonucleoprotein Sm D2 (118 aa).

Residues 1 to 31 form a disordered region; sequence MSLLNKPKSEMTPEELQKREEEEFNTGPLSV. S2 is modified (N-acetylserine). Residues K6 and K8 each participate in a glycyl lysine isopeptide (Lys-Gly) (interchain with G-Cter in SUMO2) cross-link. Residues 7–21 show a composition bias toward basic and acidic residues; it reads PKSEMTPEELQKREE. S9 is subject to Phosphoserine. T12 is modified (phosphothreonine). The Sm domain occupies 29–115; that stretch reads LSVLTQSVKN…VIVVLRNPLI (87 aa).

The protein belongs to the snRNP core protein family. Core component of the spliceosomal U1, U2, U4 and U5 small nuclear ribonucleoproteins (snRNPs), the building blocks of the spliceosome. Most spliceosomal snRNPs contain a common set of Sm proteins, SNRPB, SNRPD1, SNRPD2, SNRPD3, SNRPE, SNRPF and SNRPG that assemble in a heptameric protein ring on the Sm site of the small nuclear RNA to form the core snRNP. Component of the U1 snRNP. The U1 snRNP is composed of the U1 snRNA and the 7 core Sm proteins SNRPB, SNRPD1, SNRPD2, SNRPD3, SNRPE, SNRPF and SNRPG, and at least three U1 snRNP-specific proteins SNRNP70/U1-70K, SNRPA/U1-A and SNRPC/U1-C. Component of the U4/U6-U5 tri-snRNP complex composed of the U4, U6 and U5 snRNAs and at least PRPF3, PRPF4, PRPF6, PRPF8, PRPF31, SNRNP200, TXNL4A, SNRNP40, SNRPB, SNRPD1, SNRPD2, SNRPD3, SNRPE, SNRPF, SNRPG, DDX23, CD2BP2, PPIH, SNU13, EFTUD2, SART1 and USP39, plus LSM2, LSM3, LSM4, LSM5, LSM6, LSM7 and LSM8. Component of the minor spliceosome, which splices U12-type introns. Part of the SMN-Sm complex that contains SMN1, GEMIN2/SIP1, DDX20/GEMIN3, GEMIN4, GEMIN5, GEMIN6, GEMIN7, GEMIN8, STRAP/UNRIP and the Sm proteins SNRPB, SNRPD1, SNRPD2, SNRPD3, SNRPE, SNRPF and SNRPG; catalyzes core snRNPs assembly. Forms a 6S pICln-Sm complex composed of CLNS1A/pICln, SNRPD1, SNRPD2, SNRPE, SNRPF and SNRPG; ring-like structure where CLNS1A/pICln mimics additional Sm proteins and which is unable to assemble into the core snRNP. Interacts with SMN1; the interaction is direct. Interacts with GEMIN2; the interaction is direct. Interacts with SNRPD1; the interaction is direct. Interacts with SNRPF; the interaction is direct.

The protein localises to the cytoplasm. It localises to the cytosol. It is found in the nucleus. Functionally, plays a role in pre-mRNA splicing as a core component of the spliceosomal U1, U2, U4 and U5 small nuclear ribonucleoproteins (snRNPs), the building blocks of the spliceosome. Component of both the pre-catalytic spliceosome B complex and activated spliceosome C complexes. As a component of the minor spliceosome, involved in the splicing of U12-type introns in pre-mRNAs. The chain is Small nuclear ribonucleoprotein Sm D2 (SNRPD2) from Homo sapiens (Human).